The primary structure comprises 419 residues: L-rhamnose isomerase (419 aa).

Mn(2+) is bound by residues H262, D294, and D296.

The protein belongs to the rhamnose isomerase family. In terms of assembly, homotetramer. It depends on Mn(2+) as a cofactor.

It localises to the cytoplasm. It catalyses the reaction L-rhamnopyranose = L-rhamnulose. It participates in carbohydrate degradation; L-rhamnose degradation; glycerone phosphate from L-rhamnose: step 1/3. Its function is as follows. Catalyzes the interconversion of L-rhamnose and L-rhamnulose. The chain is L-rhamnose isomerase from Escherichia coli (strain K12 / MC4100 / BW2952).